The sequence spans 338 residues: Anthranilate phosphoribosyltransferase (338 aa).

5-phospho-alpha-D-ribose 1-diphosphate-binding positions include Gly81, 84 to 85 (GD), Thr89, 91 to 94 (NIST), 109 to 117 (KHGNRALSS), and Ala121. An anthranilate-binding site is contributed by Gly81. Ser93 contributes to the Mg(2+) binding site. Asn112 provides a ligand contact to anthranilate. Arg167 serves as a coordination point for anthranilate. 2 residues coordinate Mg(2+): Asp225 and Glu226.

Belongs to the anthranilate phosphoribosyltransferase family. In terms of assembly, homodimer. Mg(2+) serves as cofactor.

It carries out the reaction N-(5-phospho-beta-D-ribosyl)anthranilate + diphosphate = 5-phospho-alpha-D-ribose 1-diphosphate + anthranilate. It participates in amino-acid biosynthesis; L-tryptophan biosynthesis; L-tryptophan from chorismate: step 2/5. Catalyzes the transfer of the phosphoribosyl group of 5-phosphorylribose-1-pyrophosphate (PRPP) to anthranilate to yield N-(5'-phosphoribosyl)-anthranilate (PRA). This Rhizobium etli (strain ATCC 51251 / DSM 11541 / JCM 21823 / NBRC 15573 / CFN 42) protein is Anthranilate phosphoribosyltransferase.